The following is a 303-amino-acid chain: RELT-like protein 2 (303 aa).

The chain crosses the membrane as a helical span at residues 15–35 (LYMLFLLVLVFFLMGLVGFMI). Disordered regions lie at residues 46 to 67 (CRTSRGSEPDDAQLQPPEDDDM) and 132 to 303 (CLHC…AGSM). Phosphoserine is present on S52. Basic and acidic residues-rich tracts occupy residues 148-158 (RSKEGKSRPRT) and 172-188 (THIEKRYGLHEHRDGSP). The segment covering 194–212 (GSGGGQDPGGGQGSGGGQP) has biased composition (gly residues). The segment covering 278 to 296 (QEANGQPSKPDTSDHQVSL) has biased composition (polar residues).

This sequence belongs to the RELT family. As to quaternary structure, interacts with RELT, RELL1 and OXSR1. Interacts with PLSCR1. Interacts with TRAF2. Phosphorylated in vitro by OXSR1. As to expression, primarily expressed in spleen, thymus, testis, peripheral blood leukocytes, brain and placenta. Not detected in prostate, ovary, small intestine, colon, heart, lung, liver, skeletal muscle, kidney and pancreas.

The protein resides in the cell membrane. In terms of biological role, induces activation of MAPK14/p38 cascade, when overexpressed. Induces apoptosis, when overexpressed. The chain is RELT-like protein 2 (RELL2) from Homo sapiens (Human).